Here is a 105-residue protein sequence, read N- to C-terminus: Guanidinium exporter (105 aa).

The helical transmembrane segment at Met1–Lys21 threads the bilayer. The Cytoplasmic portion of the chain corresponds to Tyr22 to Arg28. The chain crosses the membrane as a helical span at residues Leu29 to Ala49. Residues Met50–Thr57 lie on the Periplasmic side of the membrane. A helical transmembrane segment spans residues Ala58–Leu78. The Cytoplasmic portion of the chain corresponds to Gly79–Ser81. The chain crosses the membrane as a helical span at residues Ala82–Leu102. Topologically, residues Ser103–His105 are periplasmic.

The protein belongs to the drug/metabolite transporter (DMT) superfamily. Small multidrug resistance (SMR) (TC 2.A.7.1) family. Gdx/SugE subfamily.

The protein localises to the cell inner membrane. In terms of biological role, guanidinium ion exporter. Couples guanidinium export to the proton motive force, exchanging one guanidinium ion for two protons. This chain is Guanidinium exporter, found in Escherichia coli O6:H1 (strain CFT073 / ATCC 700928 / UPEC).